The primary structure comprises 792 residues: Zinc finger protein 606 (792 aa).

The KRAB domain maps to 62 to 133 (VTFKDVAVDF…EQACPQRTCP (72 aa)). The C2H2-type 1; degenerate zinc finger occupies 289–311 (FKCTDAVKSFNHIIHFGDHKGIH). Residues 317 to 344 (YEYKECHQIFNQSPSFNEHPRLHVGENQ) form a C2H2-type 2; degenerate zinc finger. The segment at 400-422 (YDYNECGTSFIWSSYLIQHKKTH) adopts a C2H2-type 3; degenerate zinc-finger fold. C2H2-type zinc fingers lie at residues 428-450 (YECDKCGKVFRNRSALTKHERTH), 456-478 (YECNKCGKAFSWNSHLIVHKRIH), 484-506 (YVCNECGKSFNWNSHLIGHQRTH), 512-534 (FECTECGKSFSWSSHLIAHMRMH), 540-562 (FKCDECEKAFRDYSALSKHERTH), 568-590 (YKCTECGKSFSWSSHLIAHQRTH), 596-618 (YNCQECGKAFRERSALTKHEIIH), 624-646 (YECNKCGKSCSQMAHLVRHQRTH), 652-674 (YECNKCGKSFSQSCHLVAHRRIH), 680-702 (YKCNQCERSFNCSSHLIAHRRTH), 708-730 (YRCNECGKAFNESSSLIVHLRNH), 736-758 (YKCNHCEKAFCKNSSLIIHQRMH), and 764-786 (FICSECGKAFSGHSALLQHQRNH).

The protein belongs to the krueppel C2H2-type zinc-finger protein family. As to expression, widely expressed in adult and fetal tissues.

The protein localises to the nucleus. Functionally, may act as a transcriptional repressor. The polypeptide is Zinc finger protein 606 (ZNF606) (Homo sapiens (Human)).